We begin with the raw amino-acid sequence, 185 residues long: uncharacterized protein (185 aa).

A disordered region spans residues 160–185 (QYTGPAVPSVPTTNLNDIGDPTKTVQ).

This is an uncharacterized protein from Saccharomyces cerevisiae (strain ATCC 204508 / S288c) (Baker's yeast).